Consider the following 385-residue polypeptide: Muconate cycloisomerase 1-2 (385 aa).

Residue K171 is part of the active site. Residues E226 and D251 each contribute to the Mn(2+) site.

It belongs to the mandelate racemase/muconate lactonizing enzyme family. As to quaternary structure, homooctamer. It depends on Mn(2+) as a cofactor.

The enzyme catalyses (S)-muconolactone = cis,cis-muconate + H(+). Its pathway is aromatic compound metabolism; beta-ketoadipate pathway; 5-oxo-4,5-dihydro-2-furylacetate from catechol: step 2/3. Functionally, catalyzes a syn cycloisomerization. This is Muconate cycloisomerase 1-2 (catB2) from Acinetobacter lwoffii.